Here is a 683-residue protein sequence, read N- to C-terminus: Phosphomethylpyrimidine synthase (683 aa).

Substrate contacts are provided by residues N235, M264, Y293, H329, 349-351, 390-393, and E429; these read SRG and DGMR. Residue H433 coordinates Zn(2+). Residue Y456 participates in substrate binding. A Zn(2+)-binding site is contributed by H497. Positions 577, 580, and 585 each coordinate [4Fe-4S] cluster. The tract at residues 647 to 683 is disordered; it reads RQSPGVESTSLESTSLESTVLESTSLESTALEKAKEV. Over residues 653–675 the composition is skewed to low complexity; sequence ESTSLESTSLESTVLESTSLEST.

It belongs to the ThiC family. In terms of assembly, homodimer. The cofactor is [4Fe-4S] cluster.

It catalyses the reaction 5-amino-1-(5-phospho-beta-D-ribosyl)imidazole + S-adenosyl-L-methionine = 4-amino-2-methyl-5-(phosphooxymethyl)pyrimidine + CO + 5'-deoxyadenosine + formate + L-methionine + 3 H(+). Its pathway is cofactor biosynthesis; thiamine diphosphate biosynthesis. Functionally, catalyzes the synthesis of the hydroxymethylpyrimidine phosphate (HMP-P) moiety of thiamine from aminoimidazole ribotide (AIR) in a radical S-adenosyl-L-methionine (SAM)-dependent reaction. The chain is Phosphomethylpyrimidine synthase from Shewanella loihica (strain ATCC BAA-1088 / PV-4).